The following is a 540-amino-acid chain: Ecdysone 20-monooxygenase (540 aa).

Cysteine 488 contacts heme.

The protein belongs to the cytochrome P450 family. Heme serves as cofactor. As to expression, strong expression by embryonic stage 10 in epidermis, decreases significantly in older embryos. Third instar larvae show expression in the midgut copper cells, Malpighian tubules and fat body. In the adult ovaries, expression is seen in both nurse cells and centripetally migrating follicle cells.

It localises to the mitochondrion membrane. The catalysed reaction is ecdysone + AH2 + O2 = 20-hydroxyecdysone + A + H2O. It functions in the pathway steroid biosynthesis; ecdysteroid biosynthesis. Its function is as follows. Required for CNS development; midline glial cells. Involved in the metabolism of insect hormones; responsible for all ecdysone 20-monooxygenase activity during embryonic, larval and adult stages. May be involved in the breakdown of synthetic insecticides. This Drosophila melanogaster (Fruit fly) protein is Ecdysone 20-monooxygenase (shd).